A 242-amino-acid polypeptide reads, in one-letter code: DNA repair protein RecO (242 aa).

This sequence belongs to the RecO family.

Functionally, involved in DNA repair and RecF pathway recombination. In Nitrosospira multiformis (strain ATCC 25196 / NCIMB 11849 / C 71), this protein is DNA repair protein RecO.